Consider the following 494-residue polypeptide: WD repeat-containing protein 37 (494 aa).

Composition is skewed to polar residues over residues 1-13 (MPTE…TARQ) and 22-31 (SLSIRRTNSS). Residues 1-50 (MPTESASCSTARQTKQKRKSHSLSIRRTNSSEQERTGLPRDMLEGQDSKL) form a disordered region. The segment covering 32-47 (EQERTGLPRDMLEGQD) has biased composition (basic and acidic residues). 2 WD repeats span residues 154–194 (GHRD…CLVK) and 197–236 (GHVG…PTPQ). Residues 237–265 (PVADTSISGEDEVECSDKDEPDLDGDVSS) are disordered. Over residues 245–263 (GEDEVECSDKDEPDLDGDV) the composition is skewed to acidic residues. 5 WD repeats span residues 279–318 (SHQG…LVHS), 321–360 (GHDQ…IHSV), 365–403 (GHTD…SPIA), 406–445 (RTDS…LARL), and 452–493 (GHRR…LLQE).

In terms of assembly, forms homodimers. Interacts with PACS1. Interacts with PACS2.

The protein resides in the cytoplasm. Its subcellular location is the nucleus. Required for normal ER Ca2+ handling in lymphocytes. Together with PACS1, it plays an essential role in stabilizing peripheral lymphocyte populations. The polypeptide is WD repeat-containing protein 37 (WDR37) (Homo sapiens (Human)).